A 433-amino-acid chain; its full sequence is GTPase Der (433 aa).

2 consecutive EngA-type G domains span residues 5-167 (KKVL…GEAN) and 174-349 (IKVG…DQLE). GTP contacts are provided by residues 11-18 (GRPNVGKS), 58-62 (DTGGF), 119-122 (NKVD), 180-187 (GKPNSGKS), 227-231 (DTAGI), and 292-295 (SKWD). The KH-like domain occupies 350-429 (FKTSTPDLNK…PILVELREKI (80 aa)).

The protein belongs to the TRAFAC class TrmE-Era-EngA-EngB-Septin-like GTPase superfamily. EngA (Der) GTPase family. As to quaternary structure, associates with the 50S ribosomal subunit.

In terms of biological role, GTPase that plays an essential role in the late steps of ribosome biogenesis. The protein is GTPase Der of Borreliella afzelii (strain PKo) (Borrelia afzelii).